The sequence spans 178 residues: Cytidylate kinase 2 (178 aa).

7–15 is a binding site for ATP; it reads GKSGCGNTT.

It belongs to the cytidylate kinase family. Type 2 subfamily.

The protein resides in the cytoplasm. It catalyses the reaction CMP + ATP = CDP + ADP. The enzyme catalyses dCMP + ATP = dCDP + ADP. In Borrelia garinii subsp. bavariensis (strain ATCC BAA-2496 / DSM 23469 / PBi) (Borreliella bavariensis), this protein is Cytidylate kinase 2.